We begin with the raw amino-acid sequence, 230 residues long: Ribonuclease 3 (230 aa).

In terms of domain architecture, RNase III spans 1 to 134; it reads MKQLEELLST…FLGALLLDKG (134 aa). Glutamate 47 lines the Mg(2+) pocket. Residue aspartate 51 is part of the active site. 2 residues coordinate Mg(2+): aspartate 120 and glutamate 123. The active site involves glutamate 123. One can recognise a DRBM domain in the interval 160 to 229; the sequence is DYKTCLQEFL…AKNALAQLSE (70 aa).

It belongs to the ribonuclease III family. In terms of assembly, homodimer. It depends on Mg(2+) as a cofactor.

The protein localises to the cytoplasm. It catalyses the reaction Endonucleolytic cleavage to 5'-phosphomonoester.. Digests double-stranded RNA. Involved in the processing of primary rRNA transcript to yield the immediate precursors to the large and small rRNAs (23S and 16S). Processes some mRNAs, and tRNAs when they are encoded in the rRNA operon. Processes pre-crRNA and tracrRNA of type II CRISPR loci if present in the organism. The chain is Ribonuclease 3 from Streptococcus pyogenes serotype M28 (strain MGAS6180).